The chain runs to 21 residues: Preblooming protein 2 (21 aa).

Functionally, possible mediator for cell division in the blooming process. In Prorocentrum triestinum (Red tide alga), this protein is Preblooming protein 2.